The sequence spans 264 residues: 3-methyl-2-oxobutanoate hydroxymethyltransferase (264 aa).

2 residues coordinate Mg(2+): Asp-45 and Asp-84. 3-methyl-2-oxobutanoate contacts are provided by residues 45–46 (DS), Asp-84, and Lys-112. Glu-114 is a Mg(2+) binding site. The Proton acceptor role is filled by Glu-181.

It belongs to the PanB family. In terms of assembly, homodecamer; pentamer of dimers. Mg(2+) is required as a cofactor.

It is found in the cytoplasm. It catalyses the reaction 3-methyl-2-oxobutanoate + (6R)-5,10-methylene-5,6,7,8-tetrahydrofolate + H2O = 2-dehydropantoate + (6S)-5,6,7,8-tetrahydrofolate. The protein operates within cofactor biosynthesis; (R)-pantothenate biosynthesis; (R)-pantoate from 3-methyl-2-oxobutanoate: step 1/2. Catalyzes the reversible reaction in which hydroxymethyl group from 5,10-methylenetetrahydrofolate is transferred onto alpha-ketoisovalerate to form ketopantoate. This Vibrio atlanticus (strain LGP32) (Vibrio splendidus (strain Mel32)) protein is 3-methyl-2-oxobutanoate hydroxymethyltransferase.